The chain runs to 505 residues: Maturase K (505 aa).

The protein belongs to the intron maturase 2 family. MatK subfamily.

Its subcellular location is the plastid. The protein resides in the chloroplast. Functionally, usually encoded in the trnK tRNA gene intron. Probably assists in splicing its own and other chloroplast group II introns. The polypeptide is Maturase K (Ficus carica (Common fig)).